The chain runs to 459 residues: MSAISSRNQKMEQQRQLMEAYIRQKRASPGMVQASDLQISRPMSGMRSNSRELHAYDGPMQFISSPHNPDQILTNGSPVGGTVAMNSTRNHSNNMRTLSTISQEADLIEEISSHELEDEESSPVTVIEQQQTAPHSANSTHSQRPSTTRQPSFNDTLDEDDYTNRNIAGAAPVRPVGLASSPYKEAGLDGSSMETSNGAGGESEGDVIGNIDQFVMQPAPQGVLYKCRITRDRKGMDRGLFPIYYLHLERDYGKKIFLLGGRKRKKSKTSNYIVSCDPTDLSRSADGFCGKLRSNVFGTSFTVFDSGNKDSTDSPRLDLAVIIYDTNILGFKGPRNMTVILPGMTEDDQRVKISSADPKQTGILDLYKMKNMDNIVELHNKTPVWNDETQSYVLNFHGRVTQASVKNFQLVHDSDPEYIVMQFGRTSEDVFTMDYRYPLCAMQAFAIALSSFDGKIACE.

A disordered region spans residues 114–205 (HELEDEESSP…SNGAGGESEG (92 aa)). A compositionally biased stretch (polar residues) spans 123-155 (PVTVIEQQQTAPHSANSTHSQRPSTTRQPSFND). At S152 the chain carries Phosphoserine.

Belongs to the TUB family.

The protein resides in the cytoplasm. The protein localises to the nucleus. Its subcellular location is the cell projection. It is found in the cilium membrane. It localises to the rhabdomere. This is Protein king tubby from Drosophila persimilis (Fruit fly).